The primary structure comprises 264 residues: Thymidylate synthase 2 (264 aa).

Position 21 (R21) interacts with dUMP. (6R)-5,10-methylene-5,6,7,8-tetrahydrofolate is bound at residue H51. A dUMP-binding site is contributed by 126–127; that stretch reads RR. The Nucleophile role is filled by C146. DUMP contacts are provided by residues 166-169, N177, and 207-209; these read RSAD and HIY. D169 is a binding site for (6R)-5,10-methylene-5,6,7,8-tetrahydrofolate. Residue S263 participates in (6R)-5,10-methylene-5,6,7,8-tetrahydrofolate binding.

It belongs to the thymidylate synthase family. Bacterial-type ThyA subfamily. In terms of assembly, homodimer.

It localises to the cytoplasm. The enzyme catalyses dUMP + (6R)-5,10-methylene-5,6,7,8-tetrahydrofolate = 7,8-dihydrofolate + dTMP. Its pathway is pyrimidine metabolism; dTTP biosynthesis. Its function is as follows. Catalyzes the reductive methylation of 2'-deoxyuridine-5'-monophosphate (dUMP) to 2'-deoxythymidine-5'-monophosphate (dTMP) while utilizing 5,10-methylenetetrahydrofolate (mTHF) as the methyl donor and reductant in the reaction, yielding dihydrofolate (DHF) as a by-product. This enzymatic reaction provides an intracellular de novo source of dTMP, an essential precursor for DNA biosynthesis. This Bacillus subtilis (strain 168) protein is Thymidylate synthase 2.